A 323-amino-acid chain; its full sequence is Syntaxin-42 (323 aa).

The Cytoplasmic segment spans residues 1–302 (MATRNRTTVY…QREGAMVKCA (302 aa)). The t-SNARE coiled-coil homology domain occupies 227–289 (QHVSAERERE…EEGYKQLQKA (63 aa)). Residues 303–323 (TILLVLCLIMIVLLILKNILF) traverse the membrane as a helical; Anchor for type IV membrane protein segment.

It belongs to the syntaxin family. Interacts with VTI12 and SYP61 to form a t-SNARE complex and with VPS45. As to expression, expressed at low levels in roots, stems, flowers and leaves.

The protein resides in the golgi apparatus. Its subcellular location is the trans-Golgi network membrane. In terms of biological role, contributes to the regulation of secretory and vacuolar transport pathways in the post-Golgi network, and to the maintenance of the Golgi apparatus and trans-Golgi network (TGN) morphologies. Vesicle trafficking protein that functions in the secretory pathway and mediates liposome fusion. Required for extracellular resistance responses to a fungal pathogen. Also involved in the protection of chloroplasts from salicylic acid-dependent biotic stress. The polypeptide is Syntaxin-42 (Arabidopsis thaliana (Mouse-ear cress)).